A 302-amino-acid chain; its full sequence is Potassium/proton antiporter CemA (302 aa).

4 consecutive transmembrane segments (helical) span residues 55-75, 187-207, 225-247, and 262-282; these read VFVS…ITFL, FVSF…IIIL, FLLI…ELFL, and FIFL…KYWI.

This sequence belongs to the CemA family.

It localises to the plastid. The protein localises to the chloroplast inner membrane. It catalyses the reaction K(+)(in) + H(+)(out) = K(+)(out) + H(+)(in). Contributes to K(+)/H(+) antiport activity by supporting proton efflux to control proton extrusion and homeostasis in chloroplasts in a light-dependent manner to modulate photosynthesis. Prevents excessive induction of non-photochemical quenching (NPQ) under continuous-light conditions. Indirectly promotes efficient inorganic carbon uptake into chloroplasts. The protein is Potassium/proton antiporter CemA of Tupiella akineta (Green alga).